The primary structure comprises 371 residues: 3-isopropylmalate dehydrogenase (371 aa).

77–90 (GPKWDDNPPHLRPE) provides a ligand contact to NAD(+). Residues Arg-97, Arg-107, Arg-135, and Asp-224 each contribute to the substrate site. Residues Asp-224, Asp-248, and Asp-252 each coordinate Mg(2+). 282–294 (GSAPDIAGMNKAN) provides a ligand contact to NAD(+).

This sequence belongs to the isocitrate and isopropylmalate dehydrogenases family. LeuB type 1 subfamily. As to quaternary structure, homodimer. Requires Mg(2+) as cofactor. Mn(2+) serves as cofactor.

Its subcellular location is the cytoplasm. It catalyses the reaction (2R,3S)-3-isopropylmalate + NAD(+) = 4-methyl-2-oxopentanoate + CO2 + NADH. The protein operates within amino-acid biosynthesis; L-leucine biosynthesis; L-leucine from 3-methyl-2-oxobutanoate: step 3/4. Catalyzes the oxidation of 3-carboxy-2-hydroxy-4-methylpentanoate (3-isopropylmalate) to 3-carboxy-4-methyl-2-oxopentanoate. The product decarboxylates to 4-methyl-2 oxopentanoate. The protein is 3-isopropylmalate dehydrogenase of Geobacillus kaustophilus (strain HTA426).